The following is a 152-amino-acid chain: Proteolipid protein 2 (152 aa).

The MARVEL domain occupies 19–137 (FSRTRKGILL…DAYFTFPLRQ (119 aa)). The next 3 membrane-spanning stretches (helical) occupy residues 25–45 (GILL…FSAG), 48–68 (GYSS…VIYM), and 85–105 (FFRT…VLVE). Asn108 carries N-linked (GlcNAc...) asparagine glycosylation. A helical transmembrane segment spans residues 112 to 132 (IAAGVLGLLATCLFGYDAYFT).

The protein localises to the membrane. Its function is as follows. May play a role in cell differentiation in the intestinal epithelium. The protein is Proteolipid protein 2 (PLP2) of Oryctolagus cuniculus (Rabbit).